The chain runs to 427 residues: Mitogen-activated protein kinase 8B (427 aa).

Residues Y26 to I321 enclose the Protein kinase domain. Residues G33 to V40 and K55 each bind ATP. D151 serves as the catalytic Proton acceptor. T183 carries the phosphothreonine modification. Residues T183–Y185 carry the TXY motif. A Phosphotyrosine modification is found at Y185. The interval I372–R427 is disordered. Low complexity predominate over residues S387–S403. Residues T404 to E417 are compositionally biased toward polar residues.

Belongs to the protein kinase superfamily. CMGC Ser/Thr protein kinase family. MAP kinase subfamily. The cofactor is Mg(2+). In terms of processing, dually phosphorylated on Thr-183 and Tyr-185, which activates the enzyme. In terms of tissue distribution, expressed at high levels in the ovary and at lower levels in brain, gill, heart, spleen, liver, kidney, muscle, bladder and gut.

The enzyme catalyses L-seryl-[protein] + ATP = O-phospho-L-seryl-[protein] + ADP + H(+). It carries out the reaction L-threonyl-[protein] + ATP = O-phospho-L-threonyl-[protein] + ADP + H(+). Activated by threonine and tyrosine phosphorylation. Responds to activation by environmental stress and pro-inflammatory cytokines by phosphorylating a number of transcription factors, primarily components of AP-1 such as c-Jun and ATF2 and thus regulates AP-1 transcriptional activity. May play a role in the regulation of the circadian clock. This Cyprinus carpio (Common carp) protein is Mitogen-activated protein kinase 8B (mapk8b).